The primary structure comprises 137 residues: Transcription antitermination protein NusB (137 aa).

The protein belongs to the NusB family.

Functionally, involved in transcription antitermination. Required for transcription of ribosomal RNA (rRNA) genes. Binds specifically to the boxA antiterminator sequence of the ribosomal RNA (rrn) operons. The chain is Transcription antitermination protein NusB from Haemophilus ducreyi (strain 35000HP / ATCC 700724).